Reading from the N-terminus, the 429-residue chain is 3-phosphoshikimate 1-carboxyvinyltransferase (429 aa).

3 residues coordinate 3-phosphoshikimate: lysine 20, serine 21, and arginine 25. Phosphoenolpyruvate is bound at residue lysine 20. Positions 89 and 118 each coordinate phosphoenolpyruvate. 6 residues coordinate 3-phosphoshikimate: serine 164, serine 165, glutamine 166, serine 192, aspartate 311, and lysine 338. Residue glutamine 166 coordinates phosphoenolpyruvate. The active-site Proton acceptor is the aspartate 311. Phosphoenolpyruvate contacts are provided by arginine 342 and arginine 384.

The protein belongs to the EPSP synthase family. In terms of assembly, monomer.

It is found in the cytoplasm. The enzyme catalyses 3-phosphoshikimate + phosphoenolpyruvate = 5-O-(1-carboxyvinyl)-3-phosphoshikimate + phosphate. It functions in the pathway metabolic intermediate biosynthesis; chorismate biosynthesis. Catalyzes the transfer of the enolpyruvyl moiety of phosphoenolpyruvate (PEP) to the 5-hydroxyl of shikimate-3-phosphate (S3P) to produce enolpyruvyl shikimate-3-phosphate and inorganic phosphate. This is 3-phosphoshikimate 1-carboxyvinyltransferase from Methanococcus maripaludis (strain C7 / ATCC BAA-1331).